The chain runs to 67 residues: MARITVEDCLNQIPNRFKLTLAATYRARELAQGHAPRLDSKDKPTVTALREIASGLTGLEMLRKVPT.

The protein belongs to the RNA polymerase subunit omega family. As to quaternary structure, the RNAP catalytic core consists of 2 alpha, 1 beta, 1 beta' and 1 omega subunit. When a sigma factor is associated with the core the holoenzyme is formed, which can initiate transcription.

It carries out the reaction RNA(n) + a ribonucleoside 5'-triphosphate = RNA(n+1) + diphosphate. Promotes RNA polymerase assembly. Latches the N- and C-terminal regions of the beta' subunit thereby facilitating its interaction with the beta and alpha subunits. The sequence is that of DNA-directed RNA polymerase subunit omega from Bordetella avium (strain 197N).